Consider the following 694-residue polypeptide: Ferric reductase transmembrane component 5 (694 aa).

Residues 1–19 (MLFARLVLLLVYLAPGSLA) form the signal peptide. At 20 to 163 (KPASTKKRTQ…LDNIDKGNVY (144 aa)) the chain is on the extracellular side. The N-linked (GlcNAc...) asparagine glycan is linked to Asn-117. A helical transmembrane segment spans residues 164 to 184 (GVTICLYWIGVLFIAAVYHFL). At 185–222 (NFSRLKQTVFKNKVSAFLRGHYVLPALVHNHAMSVGRW) the chain is on the cytoplasmic side. The chain crosses the membrane as a helical span at residues 223 to 243 (FFIGLVPTRLETLVLFGYVLL). The Extracellular segment spans residues 244–267 (HGFLLSSYNFDHNELLSDRRSQVL). Residues 268-288 (IFLSDRAGILAFAHFPLIVLF) traverse the membrane as a helical segment. The 135-residue stretch at 274-408 (AGILAFAHFP…GWGEWIMACA (135 aa)) folds into the Ferric oxidoreductase domain. The Cytoplasmic portion of the chain corresponds to 289-311 (GGKNSTMTWLTGIRYTAFITYHK). Positions 310 and 324 each coordinate heme. Residues 312–334 (WLGRFMLVDCTIHAIGYTYHAYI) traverse the membrane as a helical segment. Residues 335 to 347 (ENYWKYVKYSDLW) are Extracellular-facing. A helical membrane pass occupies residues 348–368 (TSGRHAMIIVGILVFFSFFFF). Topologically, residues 369–371 (RRH) are cytoplasmic. The chain crosses the membrane as a helical span at residues 372–392 (YYELFVITHIILAIGFFHACW). Heme contacts are provided by His-380 and His-394. Residues 393–403 (KHCYKLGWGEW) lie on the Extracellular side of the membrane. Residues 404-424 (IMACALFWIADRILRLIKIAI) form a helical membrane-spanning segment. An FAD-binding FR-type domain is found at 409 to 528 (LFWIADRILR…EGPYGQSTRT (120 aa)). Over 425–694 (FGMPWAKLKL…IEYVEEFQNW (270 aa)) the chain is Cytoplasmic. Position 473 to 479 (473 to 479 (HPFTVMD)) interacts with FAD. NADP(+) contacts are provided by residues 520–523 (GPYG) and 660–661 (CG).

The protein belongs to the ferric reductase (FRE) family. Requires FAD as cofactor.

The protein localises to the cell membrane. It carries out the reaction 2 a Fe(II)-siderophore + NADP(+) + H(+) = 2 a Fe(III)-siderophore + NADPH. Functionally, metalloreductase responsible for reducing extracellular iron and copper prior to import. Catalyzes the reductive uptake of Fe(3+)-salts and Fe(3+) bound to catecholate or hydroxamate siderophores. Fe(3+) is reduced to Fe(2+), which then dissociates from the siderophore and can be imported by the high-affinity Fe(2+) transport complex in the plasma membrane. The polypeptide is Ferric reductase transmembrane component 5 (FRE5) (Saccharomyces cerevisiae (strain ATCC 204508 / S288c) (Baker's yeast)).